Consider the following 622-residue polypeptide: Iron transport multicopper oxidase fetC (622 aa).

The signal sequence occupies residues M1–A20. Residues A21–R552 are Extracellular-facing. N-linked (GlcNAc...) asparagine glycosylation is found at N28 and N74. Plastocyanin-like domains follow at residues V29–P144 and E154–K301. Positions 80 and 82 each coordinate Cu cation. N-linked (GlcNAc...) asparagine glycosylation is found at N87 and N112. Cu cation-binding residues include H124 and H126. N194, N198, N265, N292, and N358 each carry an N-linked (GlcNAc...) asparagine glycan. Residues K362–P497 enclose the Plastocyanin-like 3 domain. Cu cation contacts are provided by H412, H415, and H417. Residue N428 is glycosylated (N-linked (GlcNAc...) asparagine). Residues H478, C479, H480, and H484 each coordinate Cu cation. Residues G553–W573 traverse the membrane as a helical segment. Over Y574–T622 the chain is Cytoplasmic. The disordered stretch occupies residues T597–T622.

Belongs to the multicopper oxidase family.

It localises to the cell membrane. Cell surface ferroxidase; part of the reductive iron assimilatory system (RIA), a siderophore-independent high affinity iron uptake mechanism. Required to oxidize Fe(2+) and release it from the transporter. In Epichloe festucae (strain E2368), this protein is Iron transport multicopper oxidase fetC.